The primary structure comprises 391 residues: Pyruvate dehydrogenase E1 component subunit alpha type II, mitochondrial (391 aa).

The N-terminal 17 residues, 1–17, are a transit peptide targeting the mitochondrion; sequence SNIFKGPTVGSSVVAMS. Residues H83, Y109, R110, G148, G156, V158, D187, G188, A189, N216, and Y218 each contribute to the pyruvate site. Residues Y109 and R110 each coordinate thiamine diphosphate. Residues G156, V158, D187, G188, A189, and N216 each contribute to the thiamine diphosphate site. D187 provides a ligand contact to Mg(2+). Residues N216 and Y218 each coordinate Mg(2+). H283 is a thiamine diphosphate binding site. Phosphoserine occurs at positions 284 and 291.

In terms of assembly, heterotetramer of two PDHA2 and two PDHB subunits. The heterotetramer interacts with DLAT, and is part of the multimeric pyruvate dehydrogenase complex that contains multiple copies of pyruvate dehydrogenase (E1), dihydrolipoamide acetyltransferase (DLAT, E2) and lipoamide dehydrogenase (DLD, E3). Requires thiamine diphosphate as cofactor. It depends on Mg(2+) as a cofactor.

The protein localises to the mitochondrion matrix. The catalysed reaction is N(6)-[(R)-lipoyl]-L-lysyl-[protein] + pyruvate + H(+) = N(6)-[(R)-S(8)-acetyldihydrolipoyl]-L-lysyl-[protein] + CO2. Pyruvate dehydrogenase activity is inhibited by phosphorylation of PDHA2; it is reactivated by dephosphorylation. In terms of biological role, the pyruvate dehydrogenase complex catalyzes the overall conversion of pyruvate to acetyl-CoA and CO(2), and thereby links the glycolytic pathway to the tricarboxylic cycle. In Ascaris suum (Pig roundworm), this protein is Pyruvate dehydrogenase E1 component subunit alpha type II, mitochondrial.